A 247-amino-acid polypeptide reads, in one-letter code: Neurotrophic factor BDNF precursor form (247 aa).

A signal peptide spans 1–18; sequence MTILFLTMVISYFGCMKA. Residues 19–128 constitute a propeptide that is removed on maturation; sequence APMKEANVRG…AANMSMRVRR (110 aa). N121 carries N-linked (GlcNAc...) asparagine glycosylation. Intrachain disulfides connect C141–C208, C186–C237, and C196–C239.

This sequence belongs to the NGF-beta family. Monomers and homodimers. Binds to NTRK2/TRKB. Can form heterodimers with other neurotrophin family members, such as NTF3 and NTF4 (in vitro), but the physiological relevance of this is not clear. BDNF precursor form: interacts with the heterodimer formed by NGFR and SORCS2. Mature BDNF has much lower affinity for the heterodimer formed by NGFR and SORCS2. N-glycosylated and glycosulfated, contrary to mature BDNF. In terms of processing, mature BDNF is produced by proteolytic removal of the propeptide, catalyzed by a FURIN family member. In addition, the precursor form is proteolytically cleaved within the propeptide, but this is not an obligatory intermediate for the production of mature BDNF. Can be converted into mature BDNF by plasmin (PLG).

The protein resides in the secreted. Functionally, important signaling molecule that activates signaling cascades downstream of NTRK2. During development, promotes the survival and differentiation of selected neuronal populations of the peripheral and central nervous systems. Participates in axonal growth, pathfinding and in the modulation of dendritic growth and morphology. Major regulator of synaptic transmission and plasticity at adult synapses in many regions of the CNS. The versatility of BDNF is emphasized by its contribution to a range of adaptive neuronal responses including long-term potentiation (LTP), long-term depression (LTD), certain forms of short-term synaptic plasticity, as well as homeostatic regulation of intrinsic neuronal excitability. Its function is as follows. Important signaling molecule that activates signaling cascades downstream of NTRK2. Activates signaling cascades via the heterodimeric receptor formed by NGFR and SORCS2. Signaling via NGFR and SORCS2 plays a role in synaptic plasticity and long-term depression (LTD). Binding to NGFR and SORCS2 promotes neuronal apoptosis. Promotes neuronal growth cone collapse. This is Neurotrophic factor BDNF precursor form (BDNF) from Ailuropoda melanoleuca (Giant panda).